The following is a 141-amino-acid chain: uncharacterized protein (141 aa).

It belongs to the peptidase C56 family.

This is an uncharacterized protein from Streptomyces lividans.